The primary structure comprises 447 residues: Phosphoglucosamine mutase (447 aa).

The active-site Phosphoserine intermediate is Ser-107. Residues Ser-107, Asp-246, Asp-248, and Asp-250 each coordinate Mg(2+). Ser-107 is subject to Phosphoserine.

This sequence belongs to the phosphohexose mutase family. Requires Mg(2+) as cofactor. Activated by phosphorylation.

The catalysed reaction is alpha-D-glucosamine 1-phosphate = D-glucosamine 6-phosphate. Catalyzes the conversion of glucosamine-6-phosphate to glucosamine-1-phosphate. The chain is Phosphoglucosamine mutase from Ralstonia pickettii (strain 12J).